A 591-amino-acid polypeptide reads, in one-letter code: Aspartate--tRNA ligase (591 aa).

Residue Glu171 participates in L-aspartate binding. The aspartate stretch occupies residues 195–198; the sequence is QLFK. L-aspartate is bound at residue Arg217. ATP-binding positions include 217–219 and Gln226; that span reads RDE. His448 is a binding site for L-aspartate. Glu482 is an ATP binding site. Residue Arg489 coordinates L-aspartate. 534–537 contacts ATP; that stretch reads GLDR.

This sequence belongs to the class-II aminoacyl-tRNA synthetase family. Type 1 subfamily. In terms of assembly, homodimer.

The protein resides in the cytoplasm. The enzyme catalyses tRNA(Asp) + L-aspartate + ATP = L-aspartyl-tRNA(Asp) + AMP + diphosphate. Functionally, catalyzes the attachment of L-aspartate to tRNA(Asp) in a two-step reaction: L-aspartate is first activated by ATP to form Asp-AMP and then transferred to the acceptor end of tRNA(Asp). In Vibrio cholerae serotype O1 (strain ATCC 39541 / Classical Ogawa 395 / O395), this protein is Aspartate--tRNA ligase.